Here is a 388-residue protein sequence, read N- to C-terminus: Staphopain A (388 aa).

Residues 1 to 25 (MKRNFPKLIALSLILSLSVTPIANA) form the signal peptide. Residues 26–214 (ESNSNIKAKD…TSQFKSNNYT (189 aa)) constitute a propeptide that is removed on maturation. Active-site residues include cysteine 238, histidine 334, and asparagine 355.

This sequence belongs to the peptidase C47 family. In terms of assembly, in the cytoplasm, prematurely activated/folded ScpA forms a stable non-covalent complex with ScpB. Post-translationally, cleavage leads to the activation of ScpA probably by an auto-catalytic manner.

The protein resides in the secreted. It carries out the reaction Broad endopeptidase action on proteins including elastin, but rather limited hydrolysis of small-molecule substrates. Assays are conveniently made with hemoglobin, casein or Z-Phe-Arg-NHMec as substrate.. Prematurely activated/folded staphopain A is inhibited by staphostatin A (ScpB), which is probably required to protect staphylococcal cytoplasmic proteins from degradation by ScpA. Cysteine protease that plays an important role in the inhibition of host innate immune response. Cleaves host elastins found in connective tissues, pulmonary surfactant protein A in the lungs, and the chemokine receptor CXCR2 on leukocytes. Proteolytic cleavage of surfactant protein A impairs bacterial phagocytosis by neutrophils while CXCR2 degradation blocks neutrophil activation and chemotaxis. Additionally, promotes vascular leakage by activating the plasma kallikerin/kinin system, resulting in hypotension. This is Staphopain A (sspP) from Staphylococcus aureus (strain MSSA476).